We begin with the raw amino-acid sequence, 119 residues long: Large ribosomal subunit protein bL19 (119 aa).

Belongs to the bacterial ribosomal protein bL19 family.

Functionally, this protein is located at the 30S-50S ribosomal subunit interface and may play a role in the structure and function of the aminoacyl-tRNA binding site. This is Large ribosomal subunit protein bL19 from Pseudarthrobacter chlorophenolicus (strain ATCC 700700 / DSM 12829 / CIP 107037 / JCM 12360 / KCTC 9906 / NCIMB 13794 / A6) (Arthrobacter chlorophenolicus).